A 389-amino-acid chain; its full sequence is Choline/ethanolaminephosphotransferase 2 (389 aa).

Transmembrane regions (helical) follow at residues 49 to 69 (MITL…YIYS), 141 to 161 (TFWF…EHYF), 176 to 196 (GLAL…EWWA), 220 to 240 (IILF…NTSN), 252 to 272 (MLLA…VLIW), 286 to 306 (HLVV…MILA), 321 to 338 (MSLL…TARL), and 350 to 370 (VLLG…TSVI).

The protein belongs to the CDP-alcohol phosphatidyltransferase class-I family. It depends on Mg(2+) as a cofactor. Mn(2+) is required as a cofactor.

Its subcellular location is the membrane. It catalyses the reaction CDP-ethanolamine + a 1,2-diacyl-sn-glycerol = a 1,2-diacyl-sn-glycero-3-phosphoethanolamine + CMP + H(+). It carries out the reaction CDP-choline + a 1,2-diacyl-sn-glycerol = a 1,2-diacyl-sn-glycero-3-phosphocholine + CMP + H(+). It functions in the pathway phospholipid metabolism; phosphatidylethanolamine biosynthesis; phosphatidylethanolamine from ethanolamine: step 3/3. The protein operates within phospholipid metabolism; phosphatidylcholine biosynthesis; phosphatidylcholine from phosphocholine: step 2/2. Catalyzes both phosphatidylcholine and phosphatidylethanolamine biosynthesis from CDP-choline and CDP-ethanolamine, respectively. Has a higher cholinephosphotransferase activity than ethanolaminephosphotransferase activity. The chain is Choline/ethanolaminephosphotransferase 2 (AAPT2) from Arabidopsis thaliana (Mouse-ear cress).